Here is a 42-residue protein sequence, read N- to C-terminus: Protein YmiD (42 aa).

The chain is Protein YmiD from Escherichia coli (strain K12).